Reading from the N-terminus, the 143-residue chain is Lysozyme C (143 aa).

The N-terminal stretch at Met-1–Ala-15 is a signal peptide. A C-type lysozyme domain is found at Lys-16–Val-143. 4 disulfides stabilise this stretch: Cys-21–Cys-141, Cys-45–Cys-129, Cys-79–Cys-94, and Cys-90–Cys-108. Catalysis depends on residues Glu-50 and Asp-67.

This sequence belongs to the glycosyl hydrolase 22 family. In terms of assembly, monomer.

The protein resides in the secreted. The enzyme catalyses Hydrolysis of (1-&gt;4)-beta-linkages between N-acetylmuramic acid and N-acetyl-D-glucosamine residues in a peptidoglycan and between N-acetyl-D-glucosamine residues in chitodextrins.. Its function is as follows. Lysozymes have primarily a bacteriolytic function; those in tissues and body fluids are associated with the monocyte-macrophage system and enhance the activity of immunoagents. The protein is Lysozyme C (lys) of Scophthalmus maximus (Turbot).